Here is a 331-residue protein sequence, read N- to C-terminus: MYNSTSFTIIKHYYILGIKMPKKCTQVFDEFLQVIHQNIVGEDKAIIDILNTLGVEQANDLISAAFLKHFKFMHLEHWQRYPLNIVSTDIIDEQGENVIHKCVRYDKIDFLKHIPSIGFNLGIPNKDGDTPLHLAYKKLIYAQSYPAFTKAKNTLLNIVNFKNKDEISSQFIGVLINLEYIFKPIIDFNYNVATFNHFMHHKPSAPILSDINTPINNFKPLLPRITLLRDINETSSFRDLAPPGHKRKTNSIEYNNTKKHKTISNDSHHNLYSSIENKRLDNDLNSTSKTTTTTSYNELDKLLIAFSNTNNASINNVLDTDEVALIGNKFI.

An ANK repeat occupies Q94–V159.

This chain is Putative ankyrin repeat protein RBE_0261, found in Rickettsia bellii (strain RML369-C).